The following is a 351-amino-acid chain: Peptide chain release factor 1 (351 aa).

Gln-229 carries the N5-methylglutamine modification.

It belongs to the prokaryotic/mitochondrial release factor family. Post-translationally, methylated by PrmC. Methylation increases the termination efficiency of RF1.

It localises to the cytoplasm. Peptide chain release factor 1 directs the termination of translation in response to the peptide chain termination codons UAG and UAA. The protein is Peptide chain release factor 1 of Ruegeria pomeroyi (strain ATCC 700808 / DSM 15171 / DSS-3) (Silicibacter pomeroyi).